The chain runs to 255 residues: Glycine-rich protein DOT1 (255 aa).

The signal sequence occupies residues 1–21 (MANHKNLFFLCFLIGLGLCSA). The tract at residues 63–88 (GGGSGEGGGAGGHGEGHIGGGGGGGH) is disordered.

As to expression, expressed in emerging leaf primordia and young leaves.

It is found in the secreted. In terms of biological role, involved in leaf vasculature patterning. This chain is Glycine-rich protein DOT1, found in Arabidopsis thaliana (Mouse-ear cress).